Reading from the N-terminus, the 334-residue chain is Probable tRNA pseudouridine synthase B (334 aa).

Catalysis depends on aspartate 82, which acts as the Nucleophile. One can recognise a PUA domain in the interval 250–325; sequence LPKVWIRDSA…IAVDVDKVFM (76 aa).

This sequence belongs to the pseudouridine synthase TruB family. Type 2 subfamily.

The catalysed reaction is uridine(55) in tRNA = pseudouridine(55) in tRNA. Functionally, could be responsible for synthesis of pseudouridine from uracil-55 in the psi GC loop of transfer RNAs. This chain is Probable tRNA pseudouridine synthase B, found in Thermococcus onnurineus (strain NA1).